Here is a 700-residue protein sequence, read N- to C-terminus: Calpain-2 catalytic subunit (700 aa).

The residue at position 2 (Ala2) is an N-acetylalanine. The propeptide at 2-19 (AGIAAKLVKDREAAEGLG) is anchors to the small subunit. One can recognise a Calpain catalytic domain in the interval 45–344 (LFQDPSFPAI…YSRLEICNLT (300 aa)). Positions 89, 91, and 96 each coordinate Ca(2+). Cys105 is a catalytic residue. Glu175, Gln229, and Lys230 together coordinate Ca(2+). Catalysis depends on residues His262 and Asn286. Ca(2+)-binding residues include Glu292, Asp299, and Glu323. The segment at 345–514 (PDTLTSDTYK…KKADYQAVDD (170 aa)) is domain III. Positions 515 to 529 (EIEANLEEFDISEDD) are linker. A domain IV region spans residues 530–700 (IDDGFRRLFA…LISWLCFSVL (171 aa)). The Ca(2+) site is built by Ala542, Asp545, Glu547, Glu552, Asp585, Asp587, Ser589, Lys591, Glu596, Asp615, Asp617, Ser619, Thr621, Glu626, Asp658, and Asn661. EF-hand domains lie at 572–605 (FSIETCKIMVDMLDSDGSGKLGLKEFYILWTKIQ) and 602–637 (TKIQKYQKIYREIDVDRSGTMNSYEMRKALEEAGFK). The EF-hand 3 domain occupies 667–700 (VRLETLFKIFKQLDPENTGTIELDLISWLCFSVL).

Belongs to the peptidase C2 family. Forms a heterodimer with a small (regulatory) subunit (CAPNS1). Interacts with CPEB3; this leads to cleavage of CPEB3. It depends on Ca(2+) as a cofactor.

It localises to the cytoplasm. Its subcellular location is the cell membrane. It carries out the reaction Broad endopeptidase specificity.. Activated by 200-1000 micromolar concentrations of calcium and inhibited by calpastatin. Its function is as follows. Calcium-regulated non-lysosomal thiol-protease which catalyzes limited proteolysis of substrates involved in cytoskeletal remodeling and signal transduction. Proteolytically cleaves MYOC at 'Arg-226'. Proteolytically cleaves CPEB3 following neuronal stimulation which abolishes CPEB3 translational repressor activity, leading to translation of CPEB3 target mRNAs. In Macaca fascicularis (Crab-eating macaque), this protein is Calpain-2 catalytic subunit (CAPN2).